The sequence spans 194 residues: MTAIQLIVGLGNPGAEYEQTRHNAGAFFVERIAAAQRVNLVPERKFFGLTGRFTHQGQDVRLLIPTTYMNRSGQAVAALAGFYRIPIESILVAHDELDLPPGVAKLKVGGGHGGHNGLRDIIAQLGNQNTFHRLRLGIGHPGDASKVSGFVLGRAPRAEQEKLDASIDFALGVLPDIFAGEWNRAMKNLHSQKA.

Tyr-17 contributes to the tRNA binding site. Catalysis depends on His-22, which acts as the Proton acceptor. Tyr-68, Asn-70, and Asn-116 together coordinate tRNA.

It belongs to the PTH family. As to quaternary structure, monomer.

It is found in the cytoplasm. The enzyme catalyses an N-acyl-L-alpha-aminoacyl-tRNA + H2O = an N-acyl-L-amino acid + a tRNA + H(+). In terms of biological role, hydrolyzes ribosome-free peptidyl-tRNAs (with 1 or more amino acids incorporated), which drop off the ribosome during protein synthesis, or as a result of ribosome stalling. Functionally, catalyzes the release of premature peptidyl moieties from peptidyl-tRNA molecules trapped in stalled 50S ribosomal subunits, and thus maintains levels of free tRNAs and 50S ribosomes. This is Peptidyl-tRNA hydrolase from Pseudomonas syringae pv. tomato (strain ATCC BAA-871 / DC3000).